The following is a 520-amino-acid chain: Probable alginate O-acetylase AlgI (520 aa).

10 consecutive transmembrane segments (helical) span residues 7 to 24 (VFLF…YLSG), 39 to 61 (FYAW…NYWI), 78 to 100 (WLIL…NFGV), 115 to 137 (FVLT…ISYI), 150 to 172 (NLID…VLRF), 239 to 261 (LYFD…GFRF), 311 to 333 (LFLT…IWGA), 353 to 375 (VLNP…IFRA), 402 to 424 (ANLT…FFGL), and 483 to 505 (WLSQ…ASVL). Histidine 322 is an active-site residue.

It belongs to the membrane-bound acyltransferase family.

It localises to the cell inner membrane. Its pathway is glycan biosynthesis; alginate biosynthesis. Its function is as follows. Together with AlgJ and AlgF, forms an inner membrane complex which probably interacts with the alginate polymerization-transport complex and adds acetyl groups at the O-2 and O-3 positions of mannuronate residues. Acetylation of alginate is important for the architecture of biofilms and increases resistance to opsonic killing in the host. In Pseudomonas aeruginosa (strain ATCC 15692 / DSM 22644 / CIP 104116 / JCM 14847 / LMG 12228 / 1C / PRS 101 / PAO1), this protein is Probable alginate O-acetylase AlgI (algI).